Here is a 102-residue protein sequence, read N- to C-terminus: Small ribosomal subunit protein uS10 (102 aa).

The protein belongs to the universal ribosomal protein uS10 family. Part of the 30S ribosomal subunit.

Functionally, involved in the binding of tRNA to the ribosomes. This Geobacter metallireducens (strain ATCC 53774 / DSM 7210 / GS-15) protein is Small ribosomal subunit protein uS10.